The chain runs to 345 residues: Ribosomal RNA large subunit methyltransferase F (345 aa).

Over residues 1-14 the composition is skewed to polar residues; it reads MTSKPMTRRPTANN. 2 disordered regions span residues 1–35 and 225–258; these read MTSK…RNPH and EANS…NAAQ. The segment covering 229 to 239 has biased composition (basic residues); sequence RKQHNLQRHRG. Positions 246-258 are enriched in polar residues; that stretch reads ISRSSTKSGNAAQ.

This sequence belongs to the methyltransferase superfamily. METTL16/RlmF family.

It is found in the cytoplasm. It carries out the reaction adenosine(1618) in 23S rRNA + S-adenosyl-L-methionine = N(6)-methyladenosine(1618) in 23S rRNA + S-adenosyl-L-homocysteine + H(+). Its function is as follows. Specifically methylates the adenine in position 1618 of 23S rRNA. The sequence is that of Ribosomal RNA large subunit methyltransferase F from Psychrobacter arcticus (strain DSM 17307 / VKM B-2377 / 273-4).